The primary structure comprises 266 residues: Transcription factor atoh8 (266 aa).

The disordered stretch occupies residues 140-164 (AASQAPAGGSERAESPRKRAGEPSG). A compositionally biased stretch (basic and acidic residues) spans 150–160 (ERAESPRKRAG). A basic motif; degenerate region spans residues 175 to 188 (TRRLLANARERTRV). The region spanning 175–227 (TRRLLANARERTRVHTISAAFEALRKQVPCYSYGQKLSKLAILRIACNYILSL) is the bHLH domain. The segment at 189 to 227 (HTISAAFEALRKQVPCYSYGQKLSKLAILRIACNYILSL) is helix-loop-helix motif.

It is found in the nucleus. The protein localises to the nucleus speckle. It localises to the cytoplasm. In terms of biological role, transcription factor that binds a palindromic (canonical) core consensus DNA sequence 5'-CANNTG- 3' known as an E-box element, possibly as a heterodimer with other bHLH proteins. During development, is required for heart looping and swim bladder formation by acting in concert with GATA4 and ZFPM1. During the development of both the retina and skeletal muscles is required for neural retinal cell through modulating PAX6 and NEUROG3 expression and myogenic differentiation. In Danio rerio (Zebrafish), this protein is Transcription factor atoh8.